The sequence spans 86 residues: Cytochrome c oxidase subunit 3 (86 aa).

At 1 to 15 (MAHQAHSYHMVDPSP) the chain is on the mitochondrial matrix side. Residues 16–34 (WPIFGAAAALLTTSGLVMW) form a helical membrane-spanning segment. The Mitochondrial intermembrane segment spans residues 35–40 (FHYNSS). A helical membrane pass occupies residues 41–66 (ILLAAGLLSMLLVMLQWWREIVREST). Residues 67-86 (FQGHHTPTVQKGLRYGMILF) are Mitochondrial matrix-facing.

The protein belongs to the cytochrome c oxidase subunit 3 family. In terms of assembly, component of the cytochrome c oxidase (complex IV, CIV), a multisubunit enzyme composed of 14 subunits. The complex is composed of a catalytic core of 3 subunits MT-CO1, MT-CO2 and MT-CO3, encoded in the mitochondrial DNA, and 11 supernumerary subunits COX4I, COX5A, COX5B, COX6A, COX6B, COX6C, COX7A, COX7B, COX7C, COX8 and NDUFA4, which are encoded in the nuclear genome. The complex exists as a monomer or a dimer and forms supercomplexes (SCs) in the inner mitochondrial membrane with NADH-ubiquinone oxidoreductase (complex I, CI) and ubiquinol-cytochrome c oxidoreductase (cytochrome b-c1 complex, complex III, CIII), resulting in different assemblies (supercomplex SCI(1)III(2)IV(1) and megacomplex MCI(2)III(2)IV(2)).

It localises to the mitochondrion inner membrane. It catalyses the reaction 4 Fe(II)-[cytochrome c] + O2 + 8 H(+)(in) = 4 Fe(III)-[cytochrome c] + 2 H2O + 4 H(+)(out). Functionally, component of the cytochrome c oxidase, the last enzyme in the mitochondrial electron transport chain which drives oxidative phosphorylation. The respiratory chain contains 3 multisubunit complexes succinate dehydrogenase (complex II, CII), ubiquinol-cytochrome c oxidoreductase (cytochrome b-c1 complex, complex III, CIII) and cytochrome c oxidase (complex IV, CIV), that cooperate to transfer electrons derived from NADH and succinate to molecular oxygen, creating an electrochemical gradient over the inner membrane that drives transmembrane transport and the ATP synthase. Cytochrome c oxidase is the component of the respiratory chain that catalyzes the reduction of oxygen to water. Electrons originating from reduced cytochrome c in the intermembrane space (IMS) are transferred via the dinuclear copper A center (CU(A)) of subunit 2 and heme A of subunit 1 to the active site in subunit 1, a binuclear center (BNC) formed by heme A3 and copper B (CU(B)). The BNC reduces molecular oxygen to 2 water molecules using 4 electrons from cytochrome c in the IMS and 4 protons from the mitochondrial matrix. This chain is Cytochrome c oxidase subunit 3 (MT-CO3), found in Anas platyrhynchos (Mallard).